Here is a 240-residue protein sequence, read N- to C-terminus: PF03932 family protein CutC (240 aa).

This sequence belongs to the CutC family.

The protein localises to the cytoplasm. This Xanthomonas campestris pv. campestris (strain 8004) protein is PF03932 family protein CutC.